The primary structure comprises 43 residues: Cuticle protein CP434 (43 aa).

2 consecutive repeat copies span residues alanine 1–phenylalanine 18 and valine 25–leucine 42.

Calcified shell.

In Cancer pagurus (Rock crab), this protein is Cuticle protein CP434.